The sequence spans 1362 residues: Bromodomain-containing protein 4B (1362 aa).

Disordered regions lie at residues Glu-22–Arg-57, Ser-200–Ala-243, Leu-274–Thr-367, Asp-476–Glu-639, Cys-699–Pro-941, and Ser-953–Gln-1349. Residues Gln-34–Ile-49 show a composition bias toward pro residues. The Bromo 1 domain occupies Arg-57–Met-163. The span at Thr-219–Thr-234 shows a compositional bias: pro residues. Residues Pro-326–Val-342 are compositionally biased toward basic and acidic residues. Residues Pro-348–Ala-358 are compositionally biased toward pro residues. The Bromo 2 domain maps to Ser-365–Met-474. Residues Ala-481 to Thr-503 show a composition bias toward pro residues. The interval Thr-503–Ser-521 is NPS region. Low complexity predominate over residues Ser-504–Glu-516. Positions Gln-542–Gly-597 are BID region. Over residues Lys-553–Arg-568 the composition is skewed to basic residues. Positions Lys-569–Ala-585 are enriched in basic and acidic residues. Residues Pro-606–Pro-621 show a composition bias toward pro residues. Residues Glu-623–Gln-707 enclose the NET domain. A compositionally biased stretch (basic and acidic residues) spans Asp-628–Glu-639. Positions Ser-722–Ser-737 are enriched in low complexity. The span at Gln-750–Pro-766 shows a compositional bias: basic residues. Pro residues-rich tracts occupy residues Ile-772–Ser-793 and Pro-871–Gln-889. Residues His-893–Gln-905 are compositionally biased toward basic residues. Polar residues predominate over residues Tyr-926–Pro-941. 4 stretches are compositionally biased toward low complexity: residues Ser-953–Ser-963, Ser-977–Gly-1006, Gln-1014–Gln-1028, and His-1041–Ile-1050. The segment at Arg-1061–Phe-1361 is C-terminal (CTD) region. The segment covering Gln-1086 to Pro-1099 has biased composition (pro residues). Over residues Pro-1186–Ile-1207 the composition is skewed to basic and acidic residues. Over residues Pro-1224 to Ser-1234 the composition is skewed to polar residues. A compositionally biased stretch (basic and acidic residues) spans Glu-1236–Glu-1293. A compositionally biased stretch (low complexity) spans Pro-1308–Pro-1319. Residues Asp-1322–Arg-1334 show a composition bias toward basic and acidic residues.

Belongs to the BET family.

Its subcellular location is the nucleus. It is found in the chromosome. In terms of biological role, chromatin reader protein that recognizes and binds acetylated histones and plays a key role in transmission of epigenetic memory across cell divisions and transcription regulation. Remains associated with acetylated chromatin throughout the entire cell cycle and provides epigenetic memory for postmitotic G1 gene transcription by preserving acetylated chromatin status and maintaining high-order chromatin structure. During interphase, plays a key role in regulating the transcription of signal-inducible genes by associating with the P-TEFb complex and recruiting it to promoters. This Xenopus laevis (African clawed frog) protein is Bromodomain-containing protein 4B (brd4-b).